Here is a 62-residue protein sequence, read N- to C-terminus: UPF0434 protein Rpic_2808 (62 aa).

Belongs to the UPF0434 family.

The protein is UPF0434 protein Rpic_2808 of Ralstonia pickettii (strain 12J).